The primary structure comprises 271 residues: 3-methyl-2-oxobutanoate hydroxymethyltransferase (271 aa).

Positions 53 and 92 each coordinate Mg(2+). Residues 53–54 (DS), aspartate 92, and lysine 120 each bind 3-methyl-2-oxobutanoate. Glutamate 122 is a Mg(2+) binding site. Glutamate 189 serves as the catalytic Proton acceptor.

Belongs to the PanB family. As to quaternary structure, homodecamer; pentamer of dimers. The cofactor is Mg(2+).

The protein localises to the cytoplasm. The enzyme catalyses 3-methyl-2-oxobutanoate + (6R)-5,10-methylene-5,6,7,8-tetrahydrofolate + H2O = 2-dehydropantoate + (6S)-5,6,7,8-tetrahydrofolate. The protein operates within cofactor biosynthesis; (R)-pantothenate biosynthesis; (R)-pantoate from 3-methyl-2-oxobutanoate: step 1/2. Catalyzes the reversible reaction in which hydroxymethyl group from 5,10-methylenetetrahydrofolate is transferred onto alpha-ketoisovalerate to form ketopantoate. This Paraburkholderia phymatum (strain DSM 17167 / CIP 108236 / LMG 21445 / STM815) (Burkholderia phymatum) protein is 3-methyl-2-oxobutanoate hydroxymethyltransferase.